Reading from the N-terminus, the 465-residue chain is Pancreatic triacylglycerol lipase (465 aa).

The first 16 residues, 1 to 16 (MLLLWALPLLLGAVAG), serve as a signal peptide directing secretion. Intrachain disulfides connect Cys20–Cys26 and Cys108–Cys119. Ser170 serves as the catalytic Nucleophile. Catalysis depends on Asp194, which acts as the Charge relay system. The Ca(2+) site is built by Glu205, Arg208, Asp210, and Asp213. Cys255 and Cys279 form a disulfide bridge. Catalysis depends on His281, which acts as the Charge relay system. Intrachain disulfides connect Cys303–Cys314, Cys317–Cys321, and Cys449–Cys465. The PLAT domain occupies 355–465 (WRYQVAVTLS…EDILLTLTPC (111 aa)).

It belongs to the AB hydrolase superfamily. Lipase family. Forms a 1:1 stoichiometric complex with (pro)colipase/CLPS.

It is found in the secreted. It catalyses the reaction a triacylglycerol + H2O = a diacylglycerol + a fatty acid + H(+). The catalysed reaction is 1,2,3-tributanoylglycerol + H2O = dibutanoylglycerol + butanoate + H(+). The enzyme catalyses 1,2,3-tri-(9Z-octadecenoyl)-glycerol + H2O = di-(9Z)-octadecenoylglycerol + (9Z)-octadecenoate + H(+). It carries out the reaction all-trans-retinyl hexadecanoate + H2O = all-trans-retinol + hexadecanoate + H(+). It catalyses the reaction 1,2-di-(9Z-octadecenoyl)-glycerol + H2O = (9Z-octadecenoyl)-glycerol + (9Z)-octadecenoate + H(+). Its activity is regulated as follows. Inhibited by bile salts, is reactivated by (pro)colipase/CLPS. Plays an important role in fat metabolism. It preferentially splits the esters of long-chain fatty acids at positions 1 and 3, producing mainly 2-monoacylglycerol and free fatty acids, and shows considerably higher activity against insoluble emulsified substrates than against soluble ones. This Oryctolagus cuniculus (Rabbit) protein is Pancreatic triacylglycerol lipase (PNLIP).